Reading from the N-terminus, the 460-residue chain is V-type ATP synthase beta chain (460 aa).

This sequence belongs to the ATPase alpha/beta chains family.

Its function is as follows. Produces ATP from ADP in the presence of a proton gradient across the membrane. The V-type beta chain is a regulatory subunit. This Anaeromyxobacter sp. (strain Fw109-5) protein is V-type ATP synthase beta chain.